A 198-amino-acid polypeptide reads, in one-letter code: MGSPRPVVLSGPSGAGKSTLLKKLLQEHSSIFGFSVSHTTRDPRPGEENGKDYYFVTREVMQRDIAAGDFIEHAEFSGNLYGTSKAAVRAVQAMNRICVLDVDLQGVRNIKKTDLQPIYIFVQPPSLDVLEQRLRQRNTETEESLAKRLAAAKADMESSKEPGLFDLIIINDSLDKAYWALKEALSEEIKKAQATGHS.

Glycine 2 is modified (N-acetylglycine). The 183-residue stretch at 4 to 186 (PRPVVLSGPS…AYWALKEALS (183 aa)) folds into the Guanylate kinase-like domain. Position 14–19 (14–19 (GAGKST)) interacts with ATP. Residue 37–51 (SHTTRDPRPGEENGK) participates in substrate binding. Catalysis depends on residues arginine 44, arginine 137, and arginine 148. Position 171–172 (171–172 (ND)) interacts with ATP.

The protein belongs to the guanylate kinase family. As to quaternary structure, monomer. Interacts with RD3.

Its subcellular location is the photoreceptor inner segment. The protein localises to the cytoplasm. It localises to the cytosol. The enzyme catalyses GMP + ATP = GDP + ADP. Up-regulated by RD3. Catalyzes the phosphorylation of GMP to GDP. Essential enzyme for recycling GMP and indirectly, cyclic GMP (cGMP). Involved in the cGMP metabolism in photoreceptors. This Sus scrofa (Pig) protein is Guanylate kinase (GUK1).